A 466-amino-acid polypeptide reads, in one-letter code: Ribulose bisphosphate carboxylase large chain (466 aa).

Position 5 is an N6,N6,N6-trimethyllysine (Lys5). The substrate site is built by Asn114 and Thr164. Lys166 functions as the Proton acceptor in the catalytic mechanism. Lys168 serves as a coordination point for substrate. The Mg(2+) site is built by Lys192, Asp194, and Glu195. Position 192 is an N6-carboxylysine (Lys192). The Proton acceptor role is filled by His285. Arg286, His318, and Ser370 together coordinate substrate.

It belongs to the RuBisCO large chain family. Type I subfamily. Heterohexadecamer of 8 large chains and 8 small chains. The cofactor is Mg(2+).

Its subcellular location is the plastid. It localises to the chloroplast. The catalysed reaction is 2 (2R)-3-phosphoglycerate + 2 H(+) = D-ribulose 1,5-bisphosphate + CO2 + H2O. It carries out the reaction D-ribulose 1,5-bisphosphate + O2 = 2-phosphoglycolate + (2R)-3-phosphoglycerate + 2 H(+). Its function is as follows. RuBisCO catalyzes two reactions: the carboxylation of D-ribulose 1,5-bisphosphate, the primary event in carbon dioxide fixation, as well as the oxidative fragmentation of the pentose substrate in the photorespiration process. Both reactions occur simultaneously and in competition at the same active site. The chain is Ribulose bisphosphate carboxylase large chain from Drosera regia (King sundew).